A 106-amino-acid chain; its full sequence is MAVKIRLARFGAKKRPFYRIVVADSRAPRDGRFIERIGQYDPMLSKDNKNCVVVKADRLKYWLNVGAQASERVLWFIKKGIITLEAEKKKVETKKAEIKKVKEQEV.

This sequence belongs to the bacterial ribosomal protein bS16 family.

The polypeptide is Small ribosomal subunit protein bS16 (Wolbachia sp. subsp. Brugia malayi (strain TRS)).